The following is a 311-amino-acid chain: Putative S-adenosyl-L-methionine-dependent methyltransferase MRA_0152 (311 aa).

Residues D135 and 164–165 (DL) contribute to the S-adenosyl-L-methionine site.

The protein belongs to the UPF0677 family.

Its function is as follows. Exhibits S-adenosyl-L-methionine-dependent methyltransferase activity. The chain is Putative S-adenosyl-L-methionine-dependent methyltransferase MRA_0152 from Mycobacterium tuberculosis (strain ATCC 25177 / H37Ra).